The following is an 815-amino-acid chain: SNF1 protein kinase subunit beta-1 (815 aa).

Residues 1–11 (MGNSPSTQDPS) are compositionally biased toward polar residues. 2 disordered regions span residues 1–88 (MGNS…TIDK) and 117–148 (SDDH…KQTK). Glycine 2 carries the N-myristoyl glycine lipid modification. Residues 12-31 (HSTKKEHGHHFHDAFNKDRQ) are compositionally biased toward basic and acidic residues. The segment covering 32–42 (GSITSQLFNNR) has biased composition (polar residues). The residue at position 33 (serine 33) is a Phosphoserine. 2 stretches are compositionally biased toward basic and acidic residues: residues 72–88 (PSTD…TIDK) and 117–129 (SDDH…EEQV). Serine 181, serine 198, serine 200, serine 206, serine 209, and serine 220 each carry phosphoserine. 3 disordered regions span residues 310–335 (SHAN…NDDF), 363–389 (HQNK…FASL), and 410–444 (PLHP…SSIS). Over residues 313–326 (NNNGNIENNTRNKG) the composition is skewed to low complexity. At serine 331 the chain carries Phosphoserine. The span at 363–376 (HQNKTKKAQNKKIR) shows a compositional bias: basic residues. 2 stretches are compositionally biased toward low complexity: residues 377-389 (SASN…FASL) and 433-444 (HSNSMSSMSSIS). The interval 473 to 716 (VSTDIASALK…LQQGGNIDAE (244 aa)) is kinase-interacting sequence (KIS); required for interaction with SNF1. Phosphoserine occurs at positions 494 and 497. The interval 583–616 (TLDEELPKRPELKRFPSSSRKSSYYSAKGVERPS) is disordered. Positions 587–596 (ELPKRPELKR) are enriched in basic and acidic residues. A compositionally biased stretch (low complexity) spans 599 to 608 (SSSRKSSYYS). Serine 643 is modified (phosphoserine). The tract at residues 724 to 804 (SRYPVPDLPI…FITQVVYAPC (81 aa)) is association with SNF1 kinase complex (ASC) domain; required for interaction with SNF4.

It belongs to the 5'-AMP-activated protein kinase beta subunit family. Component of the SNF1 kinase complex, a heterotrimeric complex composed of the catalytic alpha subunit SNF1, one of the three related beta subunits SIP1, SIP2 or GAL83, and the regulatory gamma subunit SNF4. The beta subunit serves as a bridge between the catalytic and the regulatory subunit. Interacts (via KIS domain) with SNF1. Interacts (via ASC domain) with SNF4. Phosphorylated by SNF1 in vitro.

The protein resides in the cytoplasm. The protein localises to the vacuole membrane. Beta subunit of the SNF1 kinase complex, which is required for transcriptional, metabolic, and developmental adaptations in response to glucose limitation. Has a structural role, mediating heterotrimer formation, and a regulatory role, defining carbon source-regulated subcellular location and substrate specificity of the SNF1 kinase complex. Promotes the PKA-regulated relocalization of the SNF1 kinase complex to the vacuolar membrane in response to various types of carbon stress. The protein is SNF1 protein kinase subunit beta-1 (SIP1) of Saccharomyces cerevisiae (strain YJM789) (Baker's yeast).